Consider the following 109-residue polypeptide: Large ribosomal subunit protein eL30 (109 aa).

It belongs to the eukaryotic ribosomal protein eL30 family.

The protein is Large ribosomal subunit protein eL30 (RPL30) of Yarrowia lipolytica (strain CLIB 122 / E 150) (Yeast).